A 97-amino-acid chain; its full sequence is UstYa family oxidase VicYc (97 aa).

Short sequence motifs (HXXHC) lie at residues 11–15 (HELHC) and 38–42 (HANHC).

Belongs to the ustYa family.

It participates in mycotoxin biosynthesis. Its function is as follows. UstYa family oxidase, part of the gene cluster that mediates the biosynthesis of the secondary metabolite victorin, the molecular basis for Victoria blight of oats. The role of vicYc within the pathway has still to be determined. The pathway starts with the processing of the precursor vicA1 by several endopeptidases including kexin proteases as well as the cluster-specific S28 family peptidases vicPa and vicPb to produce 7 identical copies of the hexapeptide Gly-Leu-Lys-Leu-Ala-Phe. After being excised from the precursor peptide, the core peptides are cyclized and modified post-translationally by enzymes encoded within the gene cluster. The ustYa family oxidase vicYb is required for the formation of the macrocycle in victorin and the copper amine oxidases (CAOs) vicK1 and vicK2 are responsible for converting victorin to the active form by oxidizing the N-terminal glycyl residue in the peptides to glyoxylate. Relaxed substrate specificity of enzymes in the victorin biosynthetic pathway results in a metabolic grid that produces a set of analogs including victorinines B, C, E or HV-toxin M. The chain is UstYa family oxidase VicYc from Bipolaris victoriae (strain FI3) (Victoria blight of oats agent).